The sequence spans 238 residues: Enolase-phosphatase E1 (238 aa).

The protein belongs to the HAD-like hydrolase superfamily. MasA/MtnC family. Monomer. It depends on Mg(2+) as a cofactor.

The catalysed reaction is 5-methylsulfanyl-2,3-dioxopentyl phosphate + H2O = 1,2-dihydroxy-5-(methylsulfanyl)pent-1-en-3-one + phosphate. Its pathway is amino-acid biosynthesis; L-methionine biosynthesis via salvage pathway; L-methionine from S-methyl-5-thio-alpha-D-ribose 1-phosphate: step 3/6. The protein operates within amino-acid biosynthesis; L-methionine biosynthesis via salvage pathway; L-methionine from S-methyl-5-thio-alpha-D-ribose 1-phosphate: step 4/6. In terms of biological role, bifunctional enzyme that catalyzes the enolization of 2,3-diketo-5-methylthiopentyl-1-phosphate (DK-MTP-1-P) into the intermediate 2-hydroxy-3-keto-5-methylthiopentenyl-1-phosphate (HK-MTPenyl-1-P), which is then dephosphorylated to form the acireductone 1,2-dihydroxy-3-keto-5-methylthiopentene (DHK-MTPene). This chain is Enolase-phosphatase E1, found in Synechococcus elongatus (strain ATCC 33912 / PCC 7942 / FACHB-805) (Anacystis nidulans R2).